A 296-amino-acid polypeptide reads, in one-letter code: 4-diphosphocytidyl-2-C-methyl-D-erythritol kinase (296 aa).

Lys-13 is an active-site residue. ATP is bound at residue Pro-98 to Ala-108. Asp-140 is a catalytic residue.

Belongs to the GHMP kinase family. IspE subfamily.

It carries out the reaction 4-CDP-2-C-methyl-D-erythritol + ATP = 4-CDP-2-C-methyl-D-erythritol 2-phosphate + ADP + H(+). The protein operates within isoprenoid biosynthesis; isopentenyl diphosphate biosynthesis via DXP pathway; isopentenyl diphosphate from 1-deoxy-D-xylulose 5-phosphate: step 3/6. Functionally, catalyzes the phosphorylation of the position 2 hydroxy group of 4-diphosphocytidyl-2C-methyl-D-erythritol. The protein is 4-diphosphocytidyl-2-C-methyl-D-erythritol kinase of Rhodopseudomonas palustris (strain HaA2).